A 265-amino-acid chain; its full sequence is MSRLSRVFFDSPKNHKVFIPFITAGDSGLDNTFELMQVLVKNGADVIELGVPFSDPMADGPVISRSYERTVKDGVSLSDVFTVVKKFRQTNNTTAIVLMGYLNPIEVFGYQPFANAASESGVDGVLVVDMPPEEAYGLKQILDGVGINFIFLVAPTTMDERLVFLATIASGFIYFVSLKGVTGAEYLDINLVKTHILRIRQVIDLPIGVGFGIKDAISAKIVSEYADAVIVGSSLVGLVERYANDRTKMLAKVGYLANEISTIIK.

Residues Glu-48 and Asp-59 each act as proton acceptor in the active site.

The protein belongs to the TrpA family. As to quaternary structure, tetramer of two alpha and two beta chains.

The enzyme catalyses (1S,2R)-1-C-(indol-3-yl)glycerol 3-phosphate + L-serine = D-glyceraldehyde 3-phosphate + L-tryptophan + H2O. It functions in the pathway amino-acid biosynthesis; L-tryptophan biosynthesis; L-tryptophan from chorismate: step 5/5. Functionally, the alpha subunit is responsible for the aldol cleavage of indoleglycerol phosphate to indole and glyceraldehyde 3-phosphate. The protein is Tryptophan synthase alpha chain of Vesicomyosocius okutanii subsp. Calyptogena okutanii (strain HA).